The sequence spans 248 residues: Probable transcriptional regulatory protein RPB_4273 (248 aa).

The interval 1 to 22 is disordered; sequence MAGHSQFKNIMHRKGKQDAQRS.

Belongs to the TACO1 family.

The protein localises to the cytoplasm. The polypeptide is Probable transcriptional regulatory protein RPB_4273 (Rhodopseudomonas palustris (strain HaA2)).